The sequence spans 447 residues: Phosphoglucosamine mutase (447 aa).

The active-site Phosphoserine intermediate is the Ser102. Residues Ser102, Asp241, Asp243, and Asp245 each coordinate Mg(2+). A Phosphoserine modification is found at Ser102.

The protein belongs to the phosphohexose mutase family. Mg(2+) serves as cofactor. In terms of processing, activated by phosphorylation.

It catalyses the reaction alpha-D-glucosamine 1-phosphate = D-glucosamine 6-phosphate. In terms of biological role, catalyzes the conversion of glucosamine-6-phosphate to glucosamine-1-phosphate. The polypeptide is Phosphoglucosamine mutase (Pseudoalteromonas atlantica (strain T6c / ATCC BAA-1087)).